The primary structure comprises 272 residues: Probable nitrilase C965.09 (272 aa).

Residues 3–244 (ANIACVQMAP…EGVISYTVDL (242 aa)) form the CN hydrolase domain. Glu45 acts as the Proton acceptor in catalysis. Catalysis depends on Lys118, which acts as the Proton donor. Catalysis depends on Cys150, which acts as the Nucleophile.

The protein belongs to the carbon-nitrogen hydrolase superfamily.

It localises to the cytoplasm. The protein localises to the nucleus. The polypeptide is Probable nitrilase C965.09 (Schizosaccharomyces pombe (strain 972 / ATCC 24843) (Fission yeast)).